Consider the following 360-residue polypeptide: S-adenosylmethionine:tRNA ribosyltransferase-isomerase (360 aa).

The protein belongs to the QueA family. Monomer.

The protein localises to the cytoplasm. It catalyses the reaction 7-aminomethyl-7-carbaguanosine(34) in tRNA + S-adenosyl-L-methionine = epoxyqueuosine(34) in tRNA + adenine + L-methionine + 2 H(+). The protein operates within tRNA modification; tRNA-queuosine biosynthesis. Transfers and isomerizes the ribose moiety from AdoMet to the 7-aminomethyl group of 7-deazaguanine (preQ1-tRNA) to give epoxyqueuosine (oQ-tRNA). This is S-adenosylmethionine:tRNA ribosyltransferase-isomerase from Rhodopseudomonas palustris (strain ATCC BAA-98 / CGA009).